A 334-amino-acid polypeptide reads, in one-letter code: Tryptophan--tRNA ligase (334 aa).

ATP-binding positions include 12 to 14 (QPS) and 20 to 21 (GN). A 'HIGH' region motif is present at residues 13–21 (PSGIPTLGN). Asp-136 lines the L-tryptophan pocket. Residues 148–150 (GKD), Ile-187, and 196–200 (KMSKS) each bind ATP. A 'KMSKS' region motif is present at residues 196–200 (KMSKS).

Belongs to the class-I aminoacyl-tRNA synthetase family. As to quaternary structure, homodimer.

It is found in the cytoplasm. It catalyses the reaction tRNA(Trp) + L-tryptophan + ATP = L-tryptophyl-tRNA(Trp) + AMP + diphosphate + H(+). In terms of biological role, catalyzes the attachment of tryptophan to tRNA(Trp). The polypeptide is Tryptophan--tRNA ligase (Wigglesworthia glossinidia brevipalpis).